The primary structure comprises 487 residues: Protein nucleotidyltransferase YdiU (487 aa).

ATP contacts are provided by glycine 90, glycine 92, arginine 93, lysine 113, aspartate 125, glycine 126, arginine 176, and arginine 183. Aspartate 252 acts as the Proton acceptor in catalysis. Residues asparagine 253 and aspartate 262 each coordinate Mg(2+). An ATP-binding site is contributed by aspartate 262.

It belongs to the SELO family. Mg(2+) is required as a cofactor. Requires Mn(2+) as cofactor.

It catalyses the reaction L-seryl-[protein] + ATP = 3-O-(5'-adenylyl)-L-seryl-[protein] + diphosphate. It carries out the reaction L-threonyl-[protein] + ATP = 3-O-(5'-adenylyl)-L-threonyl-[protein] + diphosphate. The enzyme catalyses L-tyrosyl-[protein] + ATP = O-(5'-adenylyl)-L-tyrosyl-[protein] + diphosphate. The catalysed reaction is L-histidyl-[protein] + UTP = N(tele)-(5'-uridylyl)-L-histidyl-[protein] + diphosphate. It catalyses the reaction L-seryl-[protein] + UTP = O-(5'-uridylyl)-L-seryl-[protein] + diphosphate. It carries out the reaction L-tyrosyl-[protein] + UTP = O-(5'-uridylyl)-L-tyrosyl-[protein] + diphosphate. Its function is as follows. Nucleotidyltransferase involved in the post-translational modification of proteins. It can catalyze the addition of adenosine monophosphate (AMP) or uridine monophosphate (UMP) to a protein, resulting in modifications known as AMPylation and UMPylation. This is Protein nucleotidyltransferase YdiU from Pseudomonas savastanoi pv. phaseolicola (strain 1448A / Race 6) (Pseudomonas syringae pv. phaseolicola (strain 1448A / Race 6)).